A 331-amino-acid chain; its full sequence is Phosphoribosylformylglycinamidine cyclo-ligase (331 aa).

Belongs to the AIR synthase family.

Its subcellular location is the cytoplasm. The enzyme catalyses 2-formamido-N(1)-(5-O-phospho-beta-D-ribosyl)acetamidine + ATP = 5-amino-1-(5-phospho-beta-D-ribosyl)imidazole + ADP + phosphate + H(+). Its pathway is purine metabolism; IMP biosynthesis via de novo pathway; 5-amino-1-(5-phospho-D-ribosyl)imidazole from N(2)-formyl-N(1)-(5-phospho-D-ribosyl)glycinamide: step 2/2. The polypeptide is Phosphoribosylformylglycinamidine cyclo-ligase (Clostridium botulinum (strain Okra / Type B1)).